The chain runs to 414 residues: 2,3-diketo-5-methylthiopentyl-1-phosphate enolase (414 aa).

The Proton acceptor role is filled by Lys-99. Substrate-binding positions include Lys-148, 174-177 (KDDE), His-265, Gly-338, and 360-361 (GG). Residues Lys-174, Asp-176, and Glu-177 each coordinate Mg(2+). N6-carboxylysine is present on Lys-174.

Belongs to the RuBisCO large chain family. Type IV subfamily. As to quaternary structure, homodimer. The cofactor is Mg(2+).

It carries out the reaction 5-methylsulfanyl-2,3-dioxopentyl phosphate = 2-hydroxy-5-methylsulfanyl-3-oxopent-1-enyl phosphate. Its pathway is amino-acid biosynthesis; L-methionine biosynthesis via salvage pathway; L-methionine from S-methyl-5-thio-alpha-D-ribose 1-phosphate: step 3/6. Its function is as follows. Catalyzes the enolization of 2,3-diketo-5-methylthiopentyl-1-phosphate (DK-MTP-1-P) into 2-hydroxy-3-keto-5-methylthiopentenyl-1-phosphate (HK-MTPenyl-1-P). The protein is 2,3-diketo-5-methylthiopentyl-1-phosphate enolase of Bacillus cereus (strain ZK / E33L).